Reading from the N-terminus, the 422-residue chain is Synaptotagmin-2 (422 aa).

The interval 1–43 (MRNIFKRNQEPNVAPATTTATMPLAPVAPADNSTESTGPGESQ) is disordered. The Vesicular portion of the chain corresponds to 1–60 (MRNIFKRNQEPNVAPATTTATMPLAPVAPADNSTESTGPGESQEDMFAKLKEKFFNEINK). Low complexity predominate over residues 14-30 (APATTTATMPLAPVAPA). Over residues 31–40 (DNSTESTGPG) the composition is skewed to polar residues. Asn32 carries an N-linked (GlcNAc...) asparagine glycan. The chain crosses the membrane as a helical span at residues 61 to 87 (IPLPPWALIAMAVVAGLLLLTCCFCIC). The Cytoplasmic segment spans residues 88-422 (KKCCCKKKKN…EVDALLGKNK (335 aa)). The disordered stretch occupies residues 102-141 (GKGMKNAMNMKDMKGGQDDDDAETGLTEGEGEGEEEKEPE). Over residues 119 to 139 (DDDDAETGLTEGEGEGEEEKE) the composition is skewed to acidic residues. Phosphothreonine is present on residues Thr125 and Thr128. Positions 136-382 (EEKEPENLGK…AIGKIFVGSN (247 aa)) are phospholipid binding. 2 consecutive C2 domains span residues 142–261 (NLGK…EEWR) and 273–406 (KLGD…AQWH). 3 residues coordinate Ca(2+): Leu172, Asp173, and Asp179. Thr202 is modified (phosphothreonine). Phosphotyrosine is present on Tyr230. The Ca(2+) site is built by Asp231, Phe232, Asp233, Ser236, Lys237, Asp239, Asp304, Asp310, Asp364, and Asp366. A Phosphothreonine modification is found at Thr386.

The protein belongs to the synaptotagmin family. Homotetramer. Heterodimer; heterodimerizes with SYT1 in presence of calcium. Interacts with SCAMP5. Interacts with STON2. Interacts with PRRT2. As to quaternary structure, (Microbial infection) Interacts with C.botulinum neurotoxin type B (BoNT/B, botB). In terms of assembly, (Microbial infection) Interacts with C.botulinum neurotoxin type G (BoNT/G, botG). It depends on Ca(2+) as a cofactor. Post-translationally, phosphorylation at Thr-202 by WNK1, changes the calcium requirement for SYT2-binding to phospholipid membranes.

Its subcellular location is the cytoplasmic vesicle. The protein resides in the secretory vesicle. The protein localises to the synaptic vesicle membrane. It localises to the chromaffin granule membrane. It is found in the cytoplasm. Functionally, exhibits calcium-dependent phospholipid and inositol polyphosphate binding properties. May have a regulatory role in the membrane interactions during trafficking of synaptic vesicles at the active zone of the synapse. Plays a role in dendrite formation by melanocytes. (Microbial infection) Receptor for C.botulinum neurotoxin type B (BoNT/B, botB); interaction is improved in the presence of gangliosides. The toxin binds via the vesicular domain (residues 47-60). Its function is as follows. (Microbial infection) Receptor for C.botulinum neurotoxin type G (BoNT/G, botG); gangliosides are not required for (or only very slightly improve) binding to a membrane-anchored receptor fragment. The toxin binds via the vesicular domain (residues 47-55). The protein is Synaptotagmin-2 of Mus musculus (Mouse).